We begin with the raw amino-acid sequence, 160 residues long: Endoribonuclease YbeY (160 aa).

Residues histidine 112, histidine 116, and histidine 122 each contribute to the Zn(2+) site. Residues 141-160 are disordered; it reads ELGHPDPYACDDEEPPSKEK.

This sequence belongs to the endoribonuclease YbeY family. Requires Zn(2+) as cofactor.

It is found in the cytoplasm. Functionally, single strand-specific metallo-endoribonuclease involved in late-stage 70S ribosome quality control and in maturation of the 3' terminus of the 16S rRNA. This chain is Endoribonuclease YbeY, found in Pseudomonas paraeruginosa (strain DSM 24068 / PA7) (Pseudomonas aeruginosa (strain PA7)).